A 274-amino-acid chain; its full sequence is Ommochrome-binding protein (274 aa).

The N-terminal stretch at 1–18 is a signal peptide; that stretch reads MKLLILTICALHVNQMMA. A glycan (N-linked (GlcNAc...) asparagine) is linked at N183.

Monomer. In terms of tissue distribution, present in larval hemolymph and synthesized by the fat body.

Its function is as follows. Binds to an ommochrome, ommatin D which is a yellow chromophore. May be involved in guiding the chromophore through the hemolymph from the epidermis to the gut. This is Ommochrome-binding protein from Manduca sexta (Tobacco hawkmoth).